The following is a 143-amino-acid chain: Pollen allergen Phl p 11 (143 aa).

3 disulfides stabilise this stretch: Cys-14–Cys-85, Cys-17–Cys-127, and Cys-38–Cys-73. A glycan (N-linked (GlcNAc...) asparagine) is linked at Asn-24.

The protein belongs to the Ole e I family.

Its subcellular location is the secreted. The chain is Pollen allergen Phl p 11 from Phleum pratense (Common timothy).